The primary structure comprises 111 residues: WAP four-disulfide core domain protein 12 (111 aa).

Positions 1 to 23 (MGSSSFLVLTVSLALVTLVAAEG) are cleaved as a signal peptide. One can recognise a WAP domain in the interval 27 to 74 (GIEKAGVCPADNVRCFKSDPPQCHTDQDCLGARKCCYLHCGFKCVIPV). 4 disulfides stabilise this stretch: Cys-34/Cys-62, Cys-41/Cys-66, Cys-49/Cys-61, and Cys-55/Cys-70. A disordered region spans residues 80–111 (GGNKDEDVSGPCPEPGWEAKSPGSSSTGCPQK). A compositionally biased stretch (polar residues) spans 101–111 (PGSSSTGCPQK).

The protein localises to the secreted. In terms of biological role, antibacterial protein. Putative acid-stable proteinase inhibitor. In Papio anubis (Olive baboon), this protein is WAP four-disulfide core domain protein 12 (WFDC12).